We begin with the raw amino-acid sequence, 152 residues long: Interleukin-3 (152 aa).

Positions 1 to 19 (MSRLPVLLLLQLLVRPGLQ) are cleaved as a signal peptide. N-linked (GlcNAc...) asparagine glycosylation is found at asparagine 34 and asparagine 89. Cysteines 35 and 103 form a disulfide.

This sequence belongs to the IL-3 family. In terms of assembly, monomer. In terms of tissue distribution, activated T-cells, mast cells, natural killer cells.

The protein resides in the secreted. Granulocyte/macrophage colony-stimulating factors are cytokines that act in hematopoiesis by controlling the production, differentiation, and function of 2 related white cell populations of the blood, the granulocytes and the monocytes-macrophages. Functionally, this CSF induces granulocytes, macrophages, mast cells, stem cells, erythroid cells, eosinophils and megakaryocytes. In Pan troglodytes (Chimpanzee), this protein is Interleukin-3 (IL3).